We begin with the raw amino-acid sequence, 346 residues long: [LysW]-lysine/[LysW]-ornithine hydrolase (346 aa).

His-68 is a binding site for Zn(2+). Residue Asp-70 is part of the active site. Asp-92 lines the Zn(2+) pocket. Residue Glu-122 is the Proton acceptor of the active site. Glu-123, Glu-146, and His-317 together coordinate Zn(2+).

It belongs to the peptidase M20A family. LysK subfamily. Requires Zn(2+) as cofactor. Co(2+) serves as cofactor.

Its subcellular location is the cytoplasm. The catalysed reaction is [amino-group carrier protein]-C-terminal-gamma-(L-lysyl)-L-glutamate + H2O = [amino-group carrier protein]-C-terminal-L-glutamate + L-lysine. It catalyses the reaction [amino-group carrier protein]-C-terminal-gamma-(L-ornithyl)-L-glutamate + H2O = [amino-group carrier protein]-C-terminal-L-glutamate + L-ornithine. Its pathway is amino-acid biosynthesis; L-lysine biosynthesis via AAA pathway; L-lysine from L-alpha-aminoadipate (Thermus route): step 5/5. The protein operates within amino-acid biosynthesis; L-arginine biosynthesis. In terms of biological role, catalyzes the release of L-lysine from [LysW]-gamma-L-lysine and the release of L-ornithine from [LysW]-L-ornithine. The sequence is that of [LysW]-lysine/[LysW]-ornithine hydrolase from Saccharolobus islandicus (strain Y.G.57.14 / Yellowstone #1) (Sulfolobus islandicus).